Reading from the N-terminus, the 216-residue chain is Flavin-dependent thymidylate synthase (216 aa).

The 198-residue stretch at 9–206 (GFVELVDVMG…PWTYEAFIKY (198 aa)) folds into the ThyX domain. Residues Ser-55, 78–80 (RHR), and Glu-86 contribute to the FAD site. Residues 75-78 (QWFR), 86-90 (ELSGR), and Arg-145 contribute to the dUMP site. The ThyX motif signature appears at 78-88 (RHRIASYNELS). Residues 161 to 163 (NAR) and Asn-167 contribute to the FAD site. Arg-172 is a binding site for dUMP. Arg-172 functions as the Involved in ionization of N3 of dUMP, leading to its activation in the catalytic mechanism.

It belongs to the thymidylate synthase ThyX family. As to quaternary structure, homotetramer. Requires FAD as cofactor.

It carries out the reaction dUMP + (6R)-5,10-methylene-5,6,7,8-tetrahydrofolate + NADPH + H(+) = dTMP + (6S)-5,6,7,8-tetrahydrofolate + NADP(+). Its pathway is pyrimidine metabolism; dTTP biosynthesis. Catalyzes the reductive methylation of 2'-deoxyuridine-5'-monophosphate (dUMP) to 2'-deoxythymidine-5'-monophosphate (dTMP) while utilizing 5,10-methylenetetrahydrofolate (mTHF) as the methyl donor, and NADPH and FADH(2) as the reductant. The protein is Flavin-dependent thymidylate synthase of Thermotoga neapolitana (strain ATCC 49049 / DSM 4359 / NBRC 107923 / NS-E).